The following is a 339-amino-acid chain: Phosphate acyltransferase (339 aa).

Belongs to the PlsX family. As to quaternary structure, homodimer. Probably interacts with PlsY.

It is found in the cytoplasm. The catalysed reaction is a fatty acyl-[ACP] + phosphate = an acyl phosphate + holo-[ACP]. It participates in lipid metabolism; phospholipid metabolism. In terms of biological role, catalyzes the reversible formation of acyl-phosphate (acyl-PO(4)) from acyl-[acyl-carrier-protein] (acyl-ACP). This enzyme utilizes acyl-ACP as fatty acyl donor, but not acyl-CoA. This is Phosphate acyltransferase from Acetivibrio thermocellus (strain ATCC 27405 / DSM 1237 / JCM 9322 / NBRC 103400 / NCIMB 10682 / NRRL B-4536 / VPI 7372) (Clostridium thermocellum).